The primary structure comprises 248 residues: Probable transcriptional regulatory protein Avi_3631 (248 aa).

Belongs to the TACO1 family.

Its subcellular location is the cytoplasm. The protein is Probable transcriptional regulatory protein Avi_3631 of Allorhizobium ampelinum (strain ATCC BAA-846 / DSM 112012 / S4) (Agrobacterium vitis (strain S4)).